Here is a 120-residue protein sequence, read N- to C-terminus: Glycine cleavage system H protein (120 aa).

The Lipoyl-binding domain maps to 17–99 (VATVGITAHA…QGGGWLYRLK (83 aa)). Position 58 is an N6-lipoyllysine (lysine 58).

The protein belongs to the GcvH family. The glycine cleavage system is composed of four proteins: P, T, L and H. It depends on (R)-lipoate as a cofactor.

Its function is as follows. The glycine cleavage system catalyzes the degradation of glycine. The H protein shuttles the methylamine group of glycine from the P protein to the T protein. This is Glycine cleavage system H protein from Methylorubrum extorquens (strain CM4 / NCIMB 13688) (Methylobacterium extorquens).